Reading from the N-terminus, the 507-residue chain is Carboxypeptidase sxa2 (507 aa).

The N-terminal stretch at 1–22 is a signal peptide; sequence MLSLFLKSLFAIIIIELTIIHA. 2 N-linked (GlcNAc...) asparagine glycosylation sites follow: Asn-38 and Asn-45. The disordered stretch occupies residues 41-64; that stretch reads SASSNQTVQPRQHAAPSSDRIKSL. The active site involves Ser-200. N-linked (GlcNAc...) asparagine glycosylation is found at Asn-259, Asn-260, and Asn-300. Residue Asp-434 is part of the active site. N-linked (GlcNAc...) asparagine glycosylation occurs at Asn-448. His-487 is an active-site residue.

This sequence belongs to the peptidase S10 family.

It is found in the secreted. Functionally, involved in degradation or processing of the mating pheromones. Its loss causes a persistent response to the pheromones. It may be required for stabilization of enzymes that are essential for zygote formation. May degrade the mating pheromone P-factor. The polypeptide is Carboxypeptidase sxa2 (sxa2) (Schizosaccharomyces pombe (strain 972 / ATCC 24843) (Fission yeast)).